The following is a 259-amino-acid chain: Type III pantothenate kinase (259 aa).

ATP is bound at residue 6-13 (DVGNTNCT). 107-110 (GSDR) is a substrate binding site. D109 (proton acceptor) is an active-site residue. Residue D129 participates in K(+) binding. An ATP-binding site is contributed by T132. Substrate is bound at residue T184.

It belongs to the type III pantothenate kinase family. As to quaternary structure, homodimer. NH4(+) is required as a cofactor. It depends on K(+) as a cofactor.

It localises to the cytoplasm. It carries out the reaction (R)-pantothenate + ATP = (R)-4'-phosphopantothenate + ADP + H(+). Its pathway is cofactor biosynthesis; coenzyme A biosynthesis; CoA from (R)-pantothenate: step 1/5. Its function is as follows. Catalyzes the phosphorylation of pantothenate (Pan), the first step in CoA biosynthesis. The chain is Type III pantothenate kinase from Listeria innocua serovar 6a (strain ATCC BAA-680 / CLIP 11262).